The chain runs to 205 residues: Pyridoxine/pyridoxamine 5'-phosphate oxidase (205 aa).

Residues 53–58 (RMVLLK), 68–69 (YT), Lys75, and Gln97 contribute to the FMN site. Lys58 contributes to the substrate binding site. Tyr115, Arg119, and Ser123 together coordinate substrate. FMN-binding positions include 132–133 (QS) and Trp177. Substrate is bound at residue 183–185 (RLH). Arg187 contacts FMN.

It belongs to the pyridoxamine 5'-phosphate oxidase family. As to quaternary structure, homodimer. Requires FMN as cofactor.

It carries out the reaction pyridoxamine 5'-phosphate + O2 + H2O = pyridoxal 5'-phosphate + H2O2 + NH4(+). The catalysed reaction is pyridoxine 5'-phosphate + O2 = pyridoxal 5'-phosphate + H2O2. The protein operates within cofactor metabolism; pyridoxal 5'-phosphate salvage; pyridoxal 5'-phosphate from pyridoxamine 5'-phosphate: step 1/1. Its pathway is cofactor metabolism; pyridoxal 5'-phosphate salvage; pyridoxal 5'-phosphate from pyridoxine 5'-phosphate: step 1/1. Functionally, catalyzes the oxidation of either pyridoxine 5'-phosphate (PNP) or pyridoxamine 5'-phosphate (PMP) into pyridoxal 5'-phosphate (PLP). The polypeptide is Pyridoxine/pyridoxamine 5'-phosphate oxidase (Mesorhizobium japonicum (strain LMG 29417 / CECT 9101 / MAFF 303099) (Mesorhizobium loti (strain MAFF 303099))).